The sequence spans 322 residues: GATA transcription factor 8 (322 aa).

The interval 93 to 168 is disordered; the sequence is TLVEKKEDSF…DKDRVKDNVC (76 aa). Low complexity predominate over residues 102-141; it reads FSTNTDSSSSHSQFRSSSPVSVLESSSSSSQTTNTTSLVL. Basic residues predominate over residues 144-154; the sequence is KHGRPRTKRPR. The Nuclear localization signal signature appears at 147–154; sequence RPRTKRPR. The segment at 225–279 adopts a GATA-type zinc-finger fold; the sequence is QYPLRKCMHCEVTKTPQWRLGPMGPKTLCNACGVRYKSGRLFPEYRPAASPTFTP.

The protein belongs to the type IV zinc-finger family. Class A subfamily.

It localises to the nucleus. Its function is as follows. Transcriptional activator that specifically binds 5'-GATA-3' or 5'-GAT-3' motifs within gene promoters. May be involved in the regulation of some light-responsive genes. The chain is GATA transcription factor 8 (GATA8) from Arabidopsis thaliana (Mouse-ear cress).